The primary structure comprises 859 residues: Valine--tRNA ligase (859 aa).

Residues 46–56 (PTVSGQLHIGH) carry the 'HIGH' region motif. A 'KMSKS' region motif is present at residues 583–587 (KMSKS). Residue lysine 586 participates in ATP binding.

It belongs to the class-I aminoacyl-tRNA synthetase family. ValS type 2 subfamily. Monomer.

The protein resides in the cytoplasm. It carries out the reaction tRNA(Val) + L-valine + ATP = L-valyl-tRNA(Val) + AMP + diphosphate. Functionally, catalyzes the attachment of valine to tRNA(Val). As ValRS can inadvertently accommodate and process structurally similar amino acids such as threonine, to avoid such errors, it has a 'posttransfer' editing activity that hydrolyzes mischarged Thr-tRNA(Val) in a tRNA-dependent manner. The sequence is that of Valine--tRNA ligase from Rickettsia felis (strain ATCC VR-1525 / URRWXCal2) (Rickettsia azadi).